The chain runs to 251 residues: Imidazole glycerol phosphate synthase subunit HisF (251 aa).

Catalysis depends on residues D11 and D130.

Belongs to the HisA/HisF family. Heterodimer of HisH and HisF.

The protein localises to the cytoplasm. The catalysed reaction is 5-[(5-phospho-1-deoxy-D-ribulos-1-ylimino)methylamino]-1-(5-phospho-beta-D-ribosyl)imidazole-4-carboxamide + L-glutamine = D-erythro-1-(imidazol-4-yl)glycerol 3-phosphate + 5-amino-1-(5-phospho-beta-D-ribosyl)imidazole-4-carboxamide + L-glutamate + H(+). It participates in amino-acid biosynthesis; L-histidine biosynthesis; L-histidine from 5-phospho-alpha-D-ribose 1-diphosphate: step 5/9. In terms of biological role, IGPS catalyzes the conversion of PRFAR and glutamine to IGP, AICAR and glutamate. The HisF subunit catalyzes the cyclization activity that produces IGP and AICAR from PRFAR using the ammonia provided by the HisH subunit. In Bacteroides thetaiotaomicron (strain ATCC 29148 / DSM 2079 / JCM 5827 / CCUG 10774 / NCTC 10582 / VPI-5482 / E50), this protein is Imidazole glycerol phosphate synthase subunit HisF.